A 300-amino-acid polypeptide reads, in one-letter code: MKIAILSRDGTLYSCRRLREAAQQRGHQVEILDPLSCYMNVSPVASSIHYKGRQLPHFDAVIPRIGSAITYYGTAALRQFELLGSYPLNESVAITRARDKLRSLQLLARQGIDLPLTGIAHSPDDTSDLIAMVGGAPLVVKLVEGTQGIGVVLAETRQAAESVIDAFRGLNAHILVQEYIAEAKGCDIRCLVVGNEVVAAIERRAKEGDFRSNLHRGGMATVAQISDEERAIAIKATQTLGLDVAGVDILRATRGPLVMEVNASPGLEGVETTTGVDIASRMIAWIERQATPEFCLKIGG.

The ATP-grasp domain occupies 104–287; the sequence is LQLLARQGID…IASRMIAWIE (184 aa). ATP is bound by residues Lys141, 178–179, Asp187, and 211–213; these read EY and RSN. Mg(2+)-binding residues include Asp248, Glu260, and Asn262. Mn(2+) is bound by residues Asp248, Glu260, and Asn262.

Belongs to the RimK family. Mg(2+) serves as cofactor. It depends on Mn(2+) as a cofactor.

This Klebsiella pneumoniae (strain 342) protein is Probable alpha-L-glutamate ligase.